A 203-amino-acid chain; its full sequence is Dual-action ribosomal maturation protein DarP (203 aa).

2 disordered regions span residues 1-31 and 178-203; these read MTRK…SQLK and NADG…DRDA. Basic and acidic residues predominate over residues 21–31; the sequence is GYDRPSKSQLK. Residues 188–203 show a composition bias toward acidic residues; sequence SEADDAQDDEDDDRDA.

It belongs to the DarP family.

The protein localises to the cytoplasm. In terms of biological role, member of a network of 50S ribosomal subunit biogenesis factors which assembles along the 30S-50S interface, preventing incorrect 23S rRNA structures from forming. Promotes peptidyl transferase center (PTC) maturation. This chain is Dual-action ribosomal maturation protein DarP, found in Paraburkholderia xenovorans (strain LB400).